The sequence spans 356 residues: L-lactate dehydrogenase A (356 aa).

NAD(+) is bound by residues 75–80 (DALPDK) and arginine 121. Arginine 128, asparagine 160, and arginine 191 together coordinate substrate. Asparagine 160 is an NAD(+) binding site. Catalysis depends on histidine 215, which acts as the Proton acceptor. Threonine 270 contributes to the substrate binding site.

The protein belongs to the LDH/MDH superfamily. LDH family. As to quaternary structure, tetramer that arise from random association of LDH-A and LDH-B.

It catalyses the reaction (S)-lactate + NAD(+) = pyruvate + NADH + H(+). It functions in the pathway fermentation; pyruvate fermentation to lactate; (S)-lactate from pyruvate: step 1/1. In Hordeum vulgare (Barley), this protein is L-lactate dehydrogenase A.